The chain runs to 473 residues: PTS system trehalose-specific EIIBC component (473 aa).

Positions 1–89 (MMSKINQTDI…IASTGQAQVD (89 aa)) constitute a PTS EIIB type-1 domain. Topologically, residues 1–110 (MMSKINQTDI…MKWHEQLISH (110 aa)) are cytoplasmic. Cys29 acts as the Phosphocysteine intermediate; for EIIB activity in catalysis. Cys29 is subject to Phosphocysteine; by EIIA. The PTS EIIC type-1 domain maps to 109–473 (SHFAVIFFPL…KYRLGTLDIV (365 aa)). The helical transmembrane segment at 111 to 131 (FAVIFFPLLPALISGGLILGF) threads the bilayer. Residues 132–158 (RNVIGDLPMSNGQTLAQMYPSLQTIYD) are Periplasmic-facing. The helical transmembrane segment at 159–179 (FLWLIGEAIFFYLPVGICWSA) threads the bilayer. Residues 180–187 (VKKMGGTP) are Cytoplasmic-facing. The chain crosses the membrane as a helical span at residues 188–208 (ILGIVLGVTLVSPQLMNAYLL). Over 209–225 (GQQLPEVWDFGMFSIAK) the chain is Periplasmic. A helical membrane pass occupies residues 226-246 (VGYQAQVIPALLAGLALGVIE). The Cytoplasmic segment spans residues 247 to 258 (TRLKRIVPDYLY). Residues 259-279 (LVVVPVCSLILAVFLAHALIG) traverse the membrane as a helical segment. At 280-300 (PFGRMIGDGVAFAVRHLMTGS) the chain is on the periplasmic side. Residues 301–321 (FAPIGAALFGFLYAPLVITGV) form a helical membrane-spanning segment. At 322–340 (HQTTLAIDLQMIQSMGGTP) the chain is on the cytoplasmic side. A helical transmembrane segment spans residues 341 to 361 (VWPLIALSNIAQGSAVIGIII). At 362 to 370 (SSRKHNERE) the chain is on the periplasmic side. A helical membrane pass occupies residues 371–391 (ISVPAAISAWLGVTEPAMYGI). Residues 392–398 (NLKYRFP) lie on the Cytoplasmic side of the membrane. The helical transmembrane segment at 399-419 (MLCAMIGSGLAGLLCGLNGVM) threads the bilayer. Residues 420–440 (ANGIGVGGLPGILSIQPSYWQ) are Periplasmic-facing. A helical membrane pass occupies residues 441–461 (VFALAMAIAIIIPIVLTSFIY). Residues 462-473 (QRKYRLGTLDIV) lie on the Cytoplasmic side of the membrane.

The protein localises to the cell inner membrane. The catalysed reaction is alpha,alpha-trehalose(out) + N(pros)-phospho-L-histidyl-[protein] = alpha,alpha-trehalose 6-phosphate(in) + L-histidyl-[protein]. Its function is as follows. The phosphoenolpyruvate-dependent sugar phosphotransferase system (sugar PTS), a major carbohydrate active transport system, catalyzes the phosphorylation of incoming sugar substrates concomitantly with their translocation across the cell membrane. This system is involved in trehalose transport at low osmolarity. In Escherichia coli (strain K12), this protein is PTS system trehalose-specific EIIBC component (treB).